Reading from the N-terminus, the 76-residue chain is Candidate secreted effector protein MPL124497 (76 aa).

The signal sequence occupies residues 1–21 (MKLIIFAAISVAFMSFDQVLG).

It belongs to the CPGH1 family.

Its subcellular location is the secreted. It localises to the host cell. The protein localises to the host cytoplasm. It is found in the host nucleus. Functionally, rust effector delivered into infected tissues to modulate host functions and contribute to pathogen virulence. Enhances leaf colonization by the bacteria Pseudomonas syringae and the oomycete Hyaloperonospora arabidopsidis pathogens in an Arabidopsis thaliana infection model. The sequence is that of Candidate secreted effector protein MPL124497 from Melampsora larici-populina (strain 98AG31 / pathotype 3-4-7) (Poplar leaf rust fungus).